Consider the following 369-residue polypeptide: Variable large protein 7 (369 aa).

Positions 1 to 26 (MRKRISAIINKLNISIIIMTVVLMIG) are cleaved as a signal peptide. C27 carries N-palmitoyl cysteine lipidation. C27 is lipidated: S-diacylglycerol cysteine.

The protein belongs to the variable large protein (Vlp) family. Alpha subfamily.

The protein resides in the cell outer membrane. Functionally, the Vlp and Vsp proteins are antigenically distinct proteins, only one vlp or vsp gene is transcriptionally active at any one time. Switching between these genes is a mechanism of host immune response evasion. The chain is Variable large protein 7 from Borrelia hermsii.